The primary structure comprises 411 residues: O-glucosyltransferase rumi (411 aa).

The N-terminal stretch at 1 to 20 (MLINHLIVVLLISLVGTGGA) is a signal peptide. 4 disulfide bridges follow: Cys64–Cys75, Cys73–Cys378, Cys120–Cys126, and Cys282–Cys305. Catalysis depends on Asp151, which acts as the Proton donor/acceptor. The tract at residues 192 to 197 (ATKLHP) is interaction with the consensus sequence C-X-S-X-[PA]-C in peptide substrates. UDP-alpha-D-glucose contacts are provided by residues 229–233 (RGSRT), Arg237, 276–278 (VSF), and 294–298 (AASFR). Residues 408–411 (KDEL) carry the Prevents secretion from ER motif.

The protein belongs to the glycosyltransferase 90 family.

It is found in the endoplasmic reticulum lumen. The protein operates within protein modification; protein glycosylation. Protein O-glucosyltransferase. Catalyzes the reaction that attaches glucose through an O-glycosidic linkage to a conserved serine residue found in the consensus sequence C-X-S-X-[PA]-C in epidermal growth factor-like repeats. Regulates Notch signaling by glucosylating Notch in the ER, glucosylation is required for the correct folding and cleavage of Notch. The protein is O-glucosyltransferase rumi of Drosophila melanogaster (Fruit fly).